Reading from the N-terminus, the 432-residue chain is MDHSMSKKLHDEALLHIVGGVNSPSRSNKGVGGGIPVTMERANGAYFYDVDGNKYIDYLAAFGPIITGHAHPHITEAITKAAQNGVLYGTPTKHEITFAKMLKEAIPSLEKVRFTNSGTEAVMTTIRVARAYTGRDKIIKFAGCYHGHFDLVLVEAGSGPSTLGIPDSAGVTKSTAEEVITVPFNDLASFKEALATWGNQVAAVLVEPIVGNFGMVEPAEGFLEAINELAHENGSLVIYDEVITAFRFMYGGAQNYLGVIPDLTAMGKIIGGGLPIGAYGGRIDIMEKVAPLGPAYQAGTHAGNPASILSGIACLEVLQEEGLYDRFQKYGSMLKDGIEKAAVKHGIAVTVNQIVGALTVYFTDEPVTNYAEAGATNGDLFGRFFKGMLEEGINLAPSKYEAWFITSAHSEADILETIQAVDTVFAKMVQDK.

At K268 the chain carries N6-(pyridoxal phosphate)lysine.

It belongs to the class-III pyridoxal-phosphate-dependent aminotransferase family. HemL subfamily. As to quaternary structure, homodimer. Requires pyridoxal 5'-phosphate as cofactor.

It localises to the cytoplasm. It carries out the reaction (S)-4-amino-5-oxopentanoate = 5-aminolevulinate. The protein operates within porphyrin-containing compound metabolism; protoporphyrin-IX biosynthesis; 5-aminolevulinate from L-glutamyl-tRNA(Glu): step 2/2. In Listeria welshimeri serovar 6b (strain ATCC 35897 / DSM 20650 / CCUG 15529 / CIP 8149 / NCTC 11857 / SLCC 5334 / V8), this protein is Glutamate-1-semialdehyde 2,1-aminomutase 2.